A 185-amino-acid polypeptide reads, in one-letter code: MVNDVLREAESRMKKATEALRNHLATIRTGRASPALVEHLHVEAYGATLPLNQLATITVPEPRLLVIQPFDANTVKAISKAIMNSELGITPTDDGRVIRLAIPQLTEARRKELTKLVRARVEESKIALRNIRREALEDLRDLEHEKMISEDEHRRAQEKLQELTDRFVRELDHIGATKEAEVMEI.

The protein belongs to the RRF family.

It is found in the cytoplasm. Responsible for the release of ribosomes from messenger RNA at the termination of protein biosynthesis. May increase the efficiency of translation by recycling ribosomes from one round of translation to another. The sequence is that of Ribosome-recycling factor from Roseiflexus sp. (strain RS-1).